Here is a 286-residue protein sequence, read N- to C-terminus: tRNA (guanine-N(7)-)-methyltransferase (286 aa).

A disordered region spans residues M1–N22. S-adenosyl-L-methionine contacts are provided by residues G104, E127–I128, N162–S163, and C182. Residue D185 is part of the active site. Residue T260–E262 participates in S-adenosyl-L-methionine binding.

Belongs to the class I-like SAM-binding methyltransferase superfamily. TrmB family. In terms of assembly, forms a complex with TRM82.

The protein resides in the nucleus. The enzyme catalyses guanosine(46) in tRNA + S-adenosyl-L-methionine = N(7)-methylguanosine(46) in tRNA + S-adenosyl-L-homocysteine. Its pathway is tRNA modification; N(7)-methylguanine-tRNA biosynthesis. Its function is as follows. Catalyzes the formation of N(7)-methylguanine at position 46 (m7G46) in tRNA. The sequence is that of tRNA (guanine-N(7)-)-methyltransferase from Colletotrichum orbiculare (strain 104-T / ATCC 96160 / CBS 514.97 / LARS 414 / MAFF 240422) (Cucumber anthracnose fungus).